A 411-amino-acid polypeptide reads, in one-letter code: LL-diaminopimelate aminotransferase (411 aa).

Residues Tyr15 and Gly42 each coordinate substrate. Pyridoxal 5'-phosphate is bound by residues Tyr72, 108–109 (AK), Tyr132, Asn188, Tyr219, and 247–249 (SFS). Positions 109, 132, and 188 each coordinate substrate. Lys250 bears the N6-(pyridoxal phosphate)lysine mark. Pyridoxal 5'-phosphate is bound by residues Arg258 and Asn293. Asn293 and Arg389 together coordinate substrate.

The protein belongs to the class-I pyridoxal-phosphate-dependent aminotransferase family. LL-diaminopimelate aminotransferase subfamily. Homodimer. Requires pyridoxal 5'-phosphate as cofactor.

The catalysed reaction is (2S,6S)-2,6-diaminopimelate + 2-oxoglutarate = (S)-2,3,4,5-tetrahydrodipicolinate + L-glutamate + H2O + H(+). The protein operates within amino-acid biosynthesis; L-lysine biosynthesis via DAP pathway; LL-2,6-diaminopimelate from (S)-tetrahydrodipicolinate (aminotransferase route): step 1/1. Its function is as follows. Involved in the synthesis of meso-diaminopimelate (m-DAP or DL-DAP), required for both lysine and peptidoglycan biosynthesis. Catalyzes the direct conversion of tetrahydrodipicolinate to LL-diaminopimelate. Is also able to catalyze the reverse reaction in vitro, i.e. the transamination of LL-diaminopimelate with 2-oxoglutarate to produce tetrahydrodipicolinate and glutamate. Can also use m-DAP instead of LL-DAP as the amino-group donor, and oxaloacetate or pyruvate as the amino-group acceptor. In Desulfitobacterium hafniense (strain DSM 10664 / DCB-2), this protein is LL-diaminopimelate aminotransferase.